The primary structure comprises 463 residues: Peptidase inhibitor 16 (463 aa).

A signal peptide spans 1-27 (MHGSCSFLMLLLPLLLLLVATTGPVGA). The SCP domain occupies 37 to 165 (VELHNLYRAQ…TNIELLVCNY (129 aa)). A glycan (N-linked (GlcNAc...) asparagine) is linked at Asn114. 3 disordered regions span residues 262–281 (TQAP…TEAP), 303–341 (EPVT…DPKM), and 383–408 (LQAT…SATA). Basic and acidic residues predominate over residues 318–327 (SADKVTDKTK). Residues 386–395 (TLDHTGHTSS) form an O-glycosylated at one site region. Residues 392-408 (HTSSKSLPNFPNTSATA) show a composition bias toward polar residues. N-linked (GlcNAc...) asparagine glycans are attached at residues Asn403 and Asn409.

This sequence belongs to the CRISP family. Interacts with PSP94/MSMB. Post-translationally, N- and O-glycosylated. O-glycosylated with core 1 or possibly core 8 glycans. Expressed in prostate, testis, ovary and intestine. Concentrates in prostate cancer patient's sera.

The protein resides in the secreted. May inhibit cardiomyocyte growth. This Homo sapiens (Human) protein is Peptidase inhibitor 16 (PI16).